The primary structure comprises 177 residues: Prorelaxin (177 aa).

An N-terminal signal peptide occupies residues 1 to 22 (MSCKFVLQLLGFWLLLSQPCRA). Disulfide bonds link Cys36–Cys164, Cys48–Cys177, and Cys163–Cys168. The propeptide at 64–149 (MTEEAVSSFI…LKSLYLDTLS (86 aa)) is connecting peptide. The segment at 80-114 (FDTMPNLSEKPKTALPEGHPSLPEQQQYVPVSSDS) is disordered. The span at 102 to 114 (PEQQQYVPVSSDS) shows a compositional bias: polar residues.

Belongs to the insulin family. In terms of assembly, heterodimer of a B chain and an A chain linked by two disulfide bonds.

The protein localises to the secreted. Relaxin is an ovarian hormone that acts with estrogen to produce dilatation of the birth canal in many mammals. It bears mature young, and allows separation of the pelvic bones. The sequence is that of Prorelaxin (RLN) from Mesocricetus auratus (Golden hamster).